The following is a 209-amino-acid chain: Ubiquitin-conjugating enzyme E2 S (209 aa).

The UBC core domain occupies 14–160 (QTIRQVMREL…ARMMTEIHAQ (147 aa)). The active-site Glycyl thioester intermediate is the Cys98. Residues 165–194 (GVGAASDAKDDDGPSTKKHAGLDKKLQDKK) form a disordered region. The span at 171 to 194 (DAKDDDGPSTKKHAGLDKKLQDKK) shows a compositional bias: basic and acidic residues.

It belongs to the ubiquitin-conjugating enzyme family.

It catalyses the reaction S-ubiquitinyl-[E1 ubiquitin-activating enzyme]-L-cysteine + [E2 ubiquitin-conjugating enzyme]-L-cysteine = [E1 ubiquitin-activating enzyme]-L-cysteine + S-ubiquitinyl-[E2 ubiquitin-conjugating enzyme]-L-cysteine.. It functions in the pathway protein modification; protein ubiquitination. Its function is as follows. Catalyzes the covalent attachment of ubiquitin to other proteins. Acts as an essential factor of the anaphase promoting complex/cyclosome (APC/C), a cell cycle-regulated ubiquitin ligase that controls progression through mitosis. Acts by specifically elongating polyubiquitin chains initiated by the E2 enzyme vih/UbcH10 on APC/C substrates, enhancing the degradation of APC/C substrates by the proteasome and promoting mitotic exit. This chain is Ubiquitin-conjugating enzyme E2 S, found in Drosophila persimilis (Fruit fly).